The following is a 223-amino-acid chain: Phosphoglycolate phosphatase (223 aa).

Aspartate 10 acts as the Nucleophile in catalysis. Residues aspartate 10 and aspartate 12 each coordinate Mg(2+). Substrate is bound at residue lysine 149. Mg(2+) contacts are provided by aspartate 172 and aspartate 176.

This sequence belongs to the archaeal SPP-like hydrolase family. The cofactor is Mg(2+).

The catalysed reaction is 2-phosphoglycolate + H2O = glycolate + phosphate. Its function is as follows. Catalyzes the dephosphorylation of 2-phosphoglycolate. In Archaeoglobus fulgidus (strain ATCC 49558 / DSM 4304 / JCM 9628 / NBRC 100126 / VC-16), this protein is Phosphoglycolate phosphatase.